Reading from the N-terminus, the 485-residue chain is Probable phosphomannomutase (485 aa).

Ser-86 functions as the Phosphoserine intermediate in the catalytic mechanism. Mg(2+) is bound by residues Ser-86, Asp-236, Asp-238, and Asp-240.

This sequence belongs to the phosphohexose mutase family. The cofactor is Mg(2+).

The enzyme catalyses alpha-D-mannose 1-phosphate = D-mannose 6-phosphate. This Haemophilus influenzae (strain ATCC 51907 / DSM 11121 / KW20 / Rd) protein is Probable phosphomannomutase.